Consider the following 122-residue polypeptide: Large ribosomal subunit protein uL14 (122 aa).

Belongs to the universal ribosomal protein uL14 family. Part of the 50S ribosomal subunit. Forms a cluster with proteins L3 and L19. In the 70S ribosome, L14 and L19 interact and together make contacts with the 16S rRNA in bridges B5 and B8.

Its function is as follows. Binds to 23S rRNA. Forms part of two intersubunit bridges in the 70S ribosome. The sequence is that of Large ribosomal subunit protein uL14 from Caldicellulosiruptor saccharolyticus (strain ATCC 43494 / DSM 8903 / Tp8T 6331).